We begin with the raw amino-acid sequence, 164 residues long: Transcriptional repressor NrdR (164 aa).

A zinc finger spans residues 3-34 (CPKCNYNKSSVVDSRQAEDGNTIRRRRECESC). In terms of domain architecture, ATP-cone spans 49 to 139 (LLVIKKDGTR…VYKSFKDLDE (91 aa)).

The protein belongs to the NrdR family. Zn(2+) serves as cofactor.

Negatively regulates transcription of bacterial ribonucleotide reductase nrd genes and operons by binding to NrdR-boxes. The protein is Transcriptional repressor NrdR of Streptococcus equi subsp. zooepidemicus (strain H70).